We begin with the raw amino-acid sequence, 77 residues long: Defensin-like protein 4 (77 aa).

The N-terminal stretch at 1–30 (MKFSMRLISAVLFLVMIFVATGMGPVTVEA) is a signal peptide. 4 disulfides stabilise this stretch: Cys33–Cys77, Cys44–Cys64, Cys50–Cys71, and Cys54–Cys73.

The protein belongs to the DEFL family. As to expression, expressed in roots, siliques and seeds.

The protein localises to the secreted. Functionally, confers broad-spectrum resistance to pathogens. This chain is Defensin-like protein 4 (PDF2.1), found in Arabidopsis thaliana (Mouse-ear cress).